The primary structure comprises 371 residues: Leu/Ile/Val-binding protein homolog 1 (371 aa).

The N-terminal stretch at 1 to 23 is a signal peptide; it reads MRKTLFSGVALAAVIAFGGSAWA.

It belongs to the leucine-binding protein family.

Its function is as follows. Component of an amino-acid transport system. The chain is Leu/Ile/Val-binding protein homolog 1 from Brucella melitensis biotype 1 (strain ATCC 23456 / CCUG 17765 / NCTC 10094 / 16M).